A 124-amino-acid chain; its full sequence is Acidic phospholipase A2 (124 aa).

7 disulfides stabilise this stretch: cysteine 26–cysteine 116, cysteine 28–cysteine 44, cysteine 43–cysteine 95, cysteine 49–cysteine 124, cysteine 50–cysteine 88, cysteine 57–cysteine 81, and cysteine 75–cysteine 86. Residues tyrosine 27, glycine 29, and glycine 31 each coordinate Ca(2+). The active site involves histidine 47. Residue aspartate 48 coordinates Ca(2+). The active site involves aspartate 89.

It belongs to the phospholipase A2 family. Group II subfamily. D49 sub-subfamily. The cofactor is Ca(2+). As to expression, expressed by the venom gland.

It localises to the secreted. The catalysed reaction is a 1,2-diacyl-sn-glycero-3-phosphocholine + H2O = a 1-acyl-sn-glycero-3-phosphocholine + a fatty acid + H(+). Its function is as follows. Snake venom phospholipase A2 (PLA2) that inhibits ADP-induced platelet aggregation. PLA2 catalyzes the calcium-dependent hydrolysis of the 2-acyl groups in 3-sn-phosphoglycerides. This is Acidic phospholipase A2 from Gloydius ussuriensis (Ussuri mamushi).